Consider the following 577-residue polypeptide: Arginine--tRNA ligase (577 aa).

The 'HIGH' region motif lies at Pro-122 to His-132.

This sequence belongs to the class-I aminoacyl-tRNA synthetase family. As to quaternary structure, monomer.

It is found in the cytoplasm. The enzyme catalyses tRNA(Arg) + L-arginine + ATP = L-arginyl-tRNA(Arg) + AMP + diphosphate. In Escherichia coli O9:H4 (strain HS), this protein is Arginine--tRNA ligase.